The chain runs to 633 residues: Copine-7 (633 aa).

2 C2 domains span residues 2–133 (SAGS…MRVS) and 212–339 (NAGK…AQWD). Residues aspartate 245, aspartate 251, aspartate 307, aspartate 309, and aspartate 315 each coordinate Ca(2+). The VWFA domain maps to 382-581 (HFTVAIDFTA…PALRDIVQFV (200 aa)).

The protein belongs to the copine family. Ca(2+) is required as a cofactor. As to expression, expressed in the brain, testis, thymus and small intestine.

The protein localises to the cytoplasm. It localises to the nucleus. It is found in the cell membrane. Calcium-dependent phospholipid-binding protein that may play a role in calcium-mediated intracellular processes. The sequence is that of Copine-7 from Homo sapiens (Human).